A 500-amino-acid polypeptide reads, in one-letter code: L-arabinose isomerase (500 aa).

Mn(2+) is bound by residues Glu306, Glu333, His349, and His448.

This sequence belongs to the arabinose isomerase family. Requires Mn(2+) as cofactor.

It carries out the reaction beta-L-arabinopyranose = L-ribulose. It participates in carbohydrate degradation; L-arabinose degradation via L-ribulose; D-xylulose 5-phosphate from L-arabinose (bacterial route): step 1/3. Its function is as follows. Catalyzes the conversion of L-arabinose to L-ribulose. The protein is L-arabinose isomerase of Saccharophagus degradans (strain 2-40 / ATCC 43961 / DSM 17024).